The sequence spans 494 residues: NAD(+) hydrolase ThsA (494 aa).

The Deacetylase sirtuin-type domain maps to 11–295 (ATDKEVLIKE…TILQRYCRSK (285 aa)). Positions 30, 119, and 157 each coordinate NAD(+). The active-site Proton acceptor is the H157. Residues 296-494 (ILISGSAVEY…KIITALRAGR (199 aa)) are SLOG (STALD) domain, binds 3'cADPR. The 3'cADPR site is built by G300, S301, L339, F370, R388, K405, G416, and E420.

Belongs to the soluble Thoeris ThsA family. As to quaternary structure, homotetramer.

The protein localises to the cytoplasm. It carries out the reaction NAD(+) + H2O = ADP-D-ribose + nicotinamide + H(+). Probably activated by a signal molecule generated by endogenous ThsB1 and/or ThsB2. Can also be activated by the signal generated by ThsB of B.cereus. The activating molecule might be 3' cyclic ADP-D-ribose (3'cADPR). Functionally, probable NAD(+) hydrolyzing component (NADase) of the Thoeris antiviral defense system, composed of ThsA, TIR1 (thsB1) and TIR2 (thsB2). Activated by a signal molecule generated by endogenous TIR1, TIR2 or ThsB from B.cereus. After activation it binds and hydrolyzes NAD(+), leading to cell death and inhibition of phage replication. Expression of Thoeris in B.subtilis (strain BEST7003) confers resistance to phages phi29, phi3T, SPBeta, SBSphi11, SBSphi13, SBSphiJ, SPO1 and SPR but not SBSphiC. The TIR paralogs confer overlapping resistance to different phages. The polypeptide is NAD(+) hydrolase ThsA (Cytobacillus dafuensis (Bacillus dafuensis)).